Reading from the N-terminus, the 37-residue chain is Large ribosomal subunit protein bL36 (37 aa).

The protein belongs to the bacterial ribosomal protein bL36 family.

The chain is Large ribosomal subunit protein bL36 from Geobacter metallireducens (strain ATCC 53774 / DSM 7210 / GS-15).